The sequence spans 129 residues: Small ribosomal subunit protein uS11 (129 aa).

This sequence belongs to the universal ribosomal protein uS11 family. As to quaternary structure, part of the 30S ribosomal subunit. Interacts with proteins S7 and S18. Binds to IF-3.

Functionally, located on the platform of the 30S subunit, it bridges several disparate RNA helices of the 16S rRNA. Forms part of the Shine-Dalgarno cleft in the 70S ribosome. This chain is Small ribosomal subunit protein uS11, found in Brucella abortus (strain S19).